The primary structure comprises 907 residues: Protein translocase subunit SecA (907 aa).

ATP contacts are provided by residues Gln87, 105–109 (GEGKT), and Asp512. The tract at residues 834 to 907 (QEDVERMEEQ…KKYKQCHGKI (74 aa)) is disordered. 2 stretches are compositionally biased toward basic and acidic residues: residues 836–853 (DVER…EAAR) and 873–888 (EEAH…KVGR). Zn(2+) is bound by residues Cys892, Cys894, Cys903, and His904. Basic residues predominate over residues 898-907 (KKYKQCHGKI).

It belongs to the SecA family. In terms of assembly, monomer and homodimer. Part of the essential Sec protein translocation apparatus which comprises SecA, SecYEG and auxiliary proteins SecDF-YajC and YidC. It depends on Zn(2+) as a cofactor.

Its subcellular location is the cell inner membrane. The protein resides in the cytoplasm. It catalyses the reaction ATP + H2O + cellular proteinSide 1 = ADP + phosphate + cellular proteinSide 2.. Its function is as follows. Part of the Sec protein translocase complex. Interacts with the SecYEG preprotein conducting channel. Has a central role in coupling the hydrolysis of ATP to the transfer of proteins into and across the cell membrane, serving both as a receptor for the preprotein-SecB complex and as an ATP-driven molecular motor driving the stepwise translocation of polypeptide chains across the membrane. In Aliivibrio fischeri (strain MJ11) (Vibrio fischeri), this protein is Protein translocase subunit SecA.